The sequence spans 132 residues: Binder of sperm protein homolog 1 (132 aa).

An N-terminal signal peptide occupies residues 1–17 (MGSLMLLFVETTRNSSA). Fibronectin type-II domains are found at residues 40-84 (VTDG…FCSA) and 85-132 (EDFA…KYCE). 4 cysteine pairs are disulfide-bonded: Cys45-Cys69, Cys59-Cys82, Cys90-Cys116, and Cys104-Cys131. Asn53 is a glycosylation site (N-linked (GlcNAc...) asparagine).

The protein belongs to the seminal plasma protein family. In terms of tissue distribution, expressed only in the epididymis.

Its subcellular location is the secreted. Its function is as follows. Binds sperm in vitro and promotes sperm capacitation. Specifically promotes capacitation induced by high density lipoproteins (HDLs). Also binds heparin, phospholipid liposomes, and weakly to gelatin. Does not bind chondroitin sulfate B. This chain is Binder of sperm protein homolog 1 (BSPH1), found in Homo sapiens (Human).